Reading from the N-terminus, the 280-residue chain is MKFVGAHVSAAGGVDQAVIRAHELKATAFALFTKNQRQWHAPHLAADVIDKFKENCERYGYGSRQILPHDSYLINLGHPESEALEKSRLAFIDEMQRCEQLGIDLLNFHPGSHLNKVDVDKCLARIAESINIALNKTQRVTAVIENTAGQGTNLGFKFEHLAAIIDGVEDKNRVGVCIDTCHAFAAGYDLRTNDVCEQTFQQFEKIVGFQYLCGMHLNDAKSEFASRVDRHHSLGEGNIGKTPFSYIMKDARFDGIPLILETINPDIWPQEIAWLKLQQN.

Zn(2+) contacts are provided by His69, His109, Glu145, Asp179, His182, His216, Asp229, His231, and Glu261.

The protein belongs to the AP endonuclease 2 family. It depends on Zn(2+) as a cofactor.

The catalysed reaction is Endonucleolytic cleavage to 5'-phosphooligonucleotide end-products.. Functionally, endonuclease IV plays a role in DNA repair. It cleaves phosphodiester bonds at apurinic or apyrimidinic (AP) sites, generating a 3'-hydroxyl group and a 5'-terminal sugar phosphate. This chain is Probable endonuclease 4, found in Photorhabdus laumondii subsp. laumondii (strain DSM 15139 / CIP 105565 / TT01) (Photorhabdus luminescens subsp. laumondii).